A 439-amino-acid chain; its full sequence is Cobyrinate a,c-diamide synthase (439 aa).

Residues 238–431 form the GATase cobBQ-type domain; the sequence is KIAVAYDKAF…AHVNFLGNIE (194 aa). Cys320 serves as the catalytic Nucleophile.

This sequence belongs to the CobB/CbiA family. The cofactor is Mg(2+).

It carries out the reaction cob(II)yrinate + 2 L-glutamine + 2 ATP + 2 H2O = cob(II)yrinate a,c diamide + 2 L-glutamate + 2 ADP + 2 phosphate + 2 H(+). It functions in the pathway cofactor biosynthesis; adenosylcobalamin biosynthesis; cob(II)yrinate a,c-diamide from sirohydrochlorin (anaerobic route): step 10/10. Catalyzes the ATP-dependent amidation of the two carboxylate groups at positions a and c of cobyrinate, using either L-glutamine or ammonia as the nitrogen source. The polypeptide is Cobyrinate a,c-diamide synthase (Clostridium tetani (strain Massachusetts / E88)).